We begin with the raw amino-acid sequence, 159 residues long: U-actitoxin-Avd13b (159 aa).

The signal sequence occupies residues 1 to 18 (MKSIFLVFFAVCLVKAEA). A propeptide spanning residues 19-26 (GKGRKREP) is cleaved from the precursor. 2 cysteine pairs are disulfide-bonded: C33/C45 and C36/C52. Residues 59 to 60 (EP) constitute a propeptide that is removed on maturation. Cystine bridges form between C67-C79 and C70-C86. Positions 93–94 (EP) are excised as a propeptide. Cystine bridges form between C101–C113 and C104–C120. Positions 127–128 (EP) are excised as a propeptide. Intrachain disulfides connect C135–C147 and C138–C154.

Belongs to the sea anemone BBH family.

It is found in the secreted. The protein resides in the nematocyst. Inhibits ion channels. The sequence is that of U-actitoxin-Avd13b from Anemonia viridis (Snakelocks anemone).